Consider the following 314-residue polypeptide: 4-hydroxy-3-methylbut-2-enyl diphosphate reductase (314 aa).

Residue Cys-12 participates in [4Fe-4S] cluster binding. (2E)-4-hydroxy-3-methylbut-2-enyl diphosphate is bound by residues His-41 and His-74. Dimethylallyl diphosphate-binding residues include His-41 and His-74. Isopentenyl diphosphate-binding residues include His-41 and His-74. Cys-96 is a [4Fe-4S] cluster binding site. His-124 serves as a coordination point for (2E)-4-hydroxy-3-methylbut-2-enyl diphosphate. Dimethylallyl diphosphate is bound at residue His-124. His-124 provides a ligand contact to isopentenyl diphosphate. The active-site Proton donor is Glu-126. Thr-167 contributes to the (2E)-4-hydroxy-3-methylbut-2-enyl diphosphate binding site. Cys-197 serves as a coordination point for [4Fe-4S] cluster. Residues Ser-225, Ser-226, Asn-227, and Ser-269 each contribute to the (2E)-4-hydroxy-3-methylbut-2-enyl diphosphate site. Positions 225, 226, 227, and 269 each coordinate dimethylallyl diphosphate. Positions 225, 226, 227, and 269 each coordinate isopentenyl diphosphate.

The protein belongs to the IspH family. It depends on [4Fe-4S] cluster as a cofactor.

It carries out the reaction isopentenyl diphosphate + 2 oxidized [2Fe-2S]-[ferredoxin] + H2O = (2E)-4-hydroxy-3-methylbut-2-enyl diphosphate + 2 reduced [2Fe-2S]-[ferredoxin] + 2 H(+). It catalyses the reaction dimethylallyl diphosphate + 2 oxidized [2Fe-2S]-[ferredoxin] + H2O = (2E)-4-hydroxy-3-methylbut-2-enyl diphosphate + 2 reduced [2Fe-2S]-[ferredoxin] + 2 H(+). The protein operates within isoprenoid biosynthesis; dimethylallyl diphosphate biosynthesis; dimethylallyl diphosphate from (2E)-4-hydroxy-3-methylbutenyl diphosphate: step 1/1. Its pathway is isoprenoid biosynthesis; isopentenyl diphosphate biosynthesis via DXP pathway; isopentenyl diphosphate from 1-deoxy-D-xylulose 5-phosphate: step 6/6. Functionally, catalyzes the conversion of 1-hydroxy-2-methyl-2-(E)-butenyl 4-diphosphate (HMBPP) into a mixture of isopentenyl diphosphate (IPP) and dimethylallyl diphosphate (DMAPP). Acts in the terminal step of the DOXP/MEP pathway for isoprenoid precursor biosynthesis. The chain is 4-hydroxy-3-methylbut-2-enyl diphosphate reductase from Mannheimia succiniciproducens (strain KCTC 0769BP / MBEL55E).